The sequence spans 412 residues: CinA-like protein (412 aa).

The protein belongs to the CinA family.

This is CinA-like protein from Salinibacter ruber (strain DSM 13855 / M31).